Consider the following 1071-residue polypeptide: DNA-directed RNA polymerase subunit beta (1071 aa).

The protein belongs to the RNA polymerase beta chain family. As to quaternary structure, in plastids the minimal PEP RNA polymerase catalytic core is composed of four subunits: alpha, beta, beta', and beta''. When a (nuclear-encoded) sigma factor is associated with the core the holoenzyme is formed, which can initiate transcription.

Its subcellular location is the plastid. The protein localises to the chloroplast. The catalysed reaction is RNA(n) + a ribonucleoside 5'-triphosphate = RNA(n+1) + diphosphate. In terms of biological role, DNA-dependent RNA polymerase catalyzes the transcription of DNA into RNA using the four ribonucleoside triphosphates as substrates. This Adiantum capillus-veneris (Maidenhair fern) protein is DNA-directed RNA polymerase subunit beta.